The following is a 415-amino-acid chain: Intron-encoded DNA endonuclease aI3 (415 aa).

The COX1 exons 1 to 3 encoded stretch occupies residues 1–81 (MVQRWLYSTN…MPALIGGFGN (81 aa)). 2 helical membrane-spanning segments follow: residues 16–36 (VLYF…SLII) and 57–77 (VLVV…ALIG). A COX1 intron 3 encoded region spans residues 82-415 (QKRYESNNNN…HLKNTYLENK (334 aa)).

This sequence in the C-terminal section; belongs to the LAGLIDADG endonuclease family. Mg(2+) is required as a cofactor. The mature protein may arise from proteolytic cleavage of an in-frame translation of some COX1 exons plus the intron containing the aI3 open reading frame.

The protein localises to the mitochondrion. It localises to the membrane. Its function is as follows. Mitochondrial DNA endonuclease involved in intron homing. It introduces a specific double-strand break in the DNA of the COX1 gene and thus mediates the insertion of an intron, containing its own coding sequence (group I intron), into an intronless gene. Recognizes with high specificity and cleaves the sequence 5'-GGTTTTGGTAACTATTTATTAC-3'. In Saccharomyces cerevisiae (strain ATCC 204508 / S288c) (Baker's yeast), this protein is Intron-encoded DNA endonuclease aI3 (AI3).